Reading from the N-terminus, the 102-residue chain is Putative lipid-transfer protein DIR1 (102 aa).

A signal peptide spans 1 to 25 (MASKKAAMVMMAMIVIMAMLVDTSV). Cystine bridges form between Cys-30–Cys-67, Cys-40–Cys-56, Cys-57–Cys-94, and Cys-69–Cys-102. Gln-34 is a binding site for a 1-acyl-sn-glycero-3-phosphocholine. Residue Glu-36 coordinates Zn(2+). Asn-38 serves as a coordination point for a 1-acyl-sn-glycero-3-phosphocholine. Residue His-62 participates in Zn(2+) binding.

It belongs to the A9/FIL1 family. In terms of assembly, self-interacts and binds to AZI1. Does not interact with PDLP1. It depends on Zn(2+) as a cofactor.

The protein localises to the secreted. The protein resides in the extracellular space. It is found in the apoplast. Its subcellular location is the endoplasmic reticulum. It localises to the cell junction. The protein localises to the plasmodesma. Putative lipid transfer protein required for systemic acquired resistance (SAR) long distance signaling. May interact with a lipid-derived molecule to promote long distance signaling associated with SAR. Together with AZI1, required for glycerol-3-phosphate- (G3P) and azelaic acid- (AA) induced systemic acquired resistance (SAR). Component of plant systemic immunity involved in priming defenses in a AA-dependent manner, by modulating production and/or translocation of a mobile signal(s) during SAR. Is able to bind with high affinity monoacylated phospholipids, mainly lysophosphatidylcholines. The protein is Putative lipid-transfer protein DIR1 (DIR1) of Arabidopsis thaliana (Mouse-ear cress).